A 799-amino-acid chain; its full sequence is Armadillo repeat-containing protein wrm-1 (799 aa).

Over residues 1–10 (MEERGPDIEK) the composition is skewed to basic and acidic residues. The disordered stretch occupies residues 1 to 60 (MEERGPDIEKYGSQPCTPLSFDPMLPSTSRVATPVRPSSTLSARQAPASPFRAQPQNMEP). Positions 26–43 (PSTSRVATPVRPSSTLSA) are enriched in polar residues. An ARM repeat occupies 454-496 (ESIRRVIQVVGSDDATIAERATGVLRNIGQPNKQNKVIMVRNG).

Interacts (independently of ARM repeat) with nhr-25. Component of the beta-catenin-lit-1 complex (also called the lit-1/wrm-1 complex or the wrm-1/lit-1 kinase complex) at least composed of lit-1 and wrm-1. Interacts (via N-terminus) with lit-1; the interaction is direct and activates lit-1 kinase activity which leads to the phosphorylation of pop-1. This promotes pop-1 interaction with par-5 and translocation of pop-1 from the nucleus to the cytoplasm.

The protein resides in the cytoplasm. It is found in the cell cortex. Its subcellular location is the nucleus. In terms of biological role, antagonistic role in the Wnt signaling pathway that operates in embryogenesis. When located at the cortex it has been shown to inhibit Wnt signaling during asymmetric cell division but when relocated to the nucleus it shows positive regulation. Has a role in blastomere signaling during endoderm specification. Component of the beta-catenin-lit-1 complex which promotes phosphorylation, down-regulation and subcellular relocation of pop-1. Within the complex, activates lit-1-dependent kinase activity. Can substitute for bar-1 indicating functional redundancy. Appears to have a role in centrosome positioning. Involved in the development of distal tip cells (DTC) by regulating the asymmetric distribution of cye-1 and cki-1 between the daughters of Z1.a and Z4.p cells. This is Armadillo repeat-containing protein wrm-1 from Caenorhabditis briggsae.